Consider the following 155-residue polypeptide: Small ribosomal subunit protein uS7 (155 aa).

This sequence belongs to the universal ribosomal protein uS7 family. In terms of assembly, part of the 30S ribosomal subunit. Contacts proteins S9 and S11.

Functionally, one of the primary rRNA binding proteins, it binds directly to 16S rRNA where it nucleates assembly of the head domain of the 30S subunit. Is located at the subunit interface close to the decoding center, probably blocks exit of the E-site tRNA. This chain is Small ribosomal subunit protein uS7, found in Helicobacter acinonychis (strain Sheeba).